We begin with the raw amino-acid sequence, 129 residues long: Large ribosomal subunit protein bL12 (129 aa).

It belongs to the bacterial ribosomal protein bL12 family. As to quaternary structure, homodimer. Part of the ribosomal stalk of the 50S ribosomal subunit. Forms a multimeric L10(L12)X complex, where L10 forms an elongated spine to which 2 to 4 L12 dimers bind in a sequential fashion. Binds GTP-bound translation factors.

Forms part of the ribosomal stalk which helps the ribosome interact with GTP-bound translation factors. Is thus essential for accurate translation. This Fervidobacterium nodosum (strain ATCC 35602 / DSM 5306 / Rt17-B1) protein is Large ribosomal subunit protein bL12.